Here is a 171-residue protein sequence, read N- to C-terminus: Co-chaperone protein HscB homolog (171 aa).

In terms of domain architecture, J spans Asn-2–Leu-69.

This sequence belongs to the HscB family. Interacts with HscA and stimulates its ATPase activity.

Its function is as follows. Co-chaperone involved in the maturation of iron-sulfur cluster-containing proteins. Seems to help targeting proteins to be folded toward HscA. This chain is Co-chaperone protein HscB homolog, found in Acinetobacter baylyi (strain ATCC 33305 / BD413 / ADP1).